We begin with the raw amino-acid sequence, 255 residues long: Type III pantothenate kinase (255 aa).

6 to 13 (DVGNSYTM) serves as a coordination point for ATP. 107 to 110 (GADR) is a substrate binding site. Residue Asp-109 is the Proton acceptor of the active site. Residue Asp-129 coordinates K(+). Thr-132 is an ATP binding site. Thr-183 contributes to the substrate binding site.

The protein belongs to the type III pantothenate kinase family. As to quaternary structure, homodimer. The cofactor is NH4(+). K(+) serves as cofactor.

It is found in the cytoplasm. The enzyme catalyses (R)-pantothenate + ATP = (R)-4'-phosphopantothenate + ADP + H(+). It functions in the pathway cofactor biosynthesis; coenzyme A biosynthesis; CoA from (R)-pantothenate: step 1/5. Functionally, catalyzes the phosphorylation of pantothenate (Pan), the first step in CoA biosynthesis. The sequence is that of Type III pantothenate kinase from Petrotoga mobilis (strain DSM 10674 / SJ95).